Consider the following 630-residue polypeptide: Sodium-dependent serotonin transporter (630 aa).

The Cytoplasmic portion of the chain corresponds to 1-87; that stretch reads METTPLNSQK…ERETWGKKMD (87 aa). Residues 23–60 form a disordered region; sequence ENGVLQKGVPTTADRAEPSQISNGYSAVPSTSAGDEAS. The segment covering 41–55 has biased composition (polar residues); it reads SQISNGYSAVPSTSA. A Phosphotyrosine modification is found at Tyr-47. The chain crosses the membrane as a helical span at residues 88–112; sequence FLLSVIGYAVDLGNIWRFPYICYQN. The Na(+) site is built by Gly-94, Ala-96, Val-97, Asp-98, and Asn-101. Residue Asp-98 participates in serotonin binding. The Extracellular portion of the chain corresponds to 113–115; sequence GGG. The chain crosses the membrane as a helical span at residues 116 to 135; the sequence is AFLLPYTIMAIFGGIPLFYM. Topologically, residues 136-160 are cytoplasmic; that stretch reads ELALGQYHRNGCISIWRKICPIFKG. Residue Tyr-142 is modified to Phosphotyrosine. A helical membrane pass occupies residues 161–186; that stretch reads IGYAICIIAFYIASYYNTIIAWALYY. Residues 187–252 are Extracellular-facing; the sequence is LISSLTDRLP…KGLQDLGTIS (66 aa). Cysteines 200 and 209 form a disulfide. N-linked (GlcNAc...) asparagine glycosylation is found at Asn-208 and Asn-217. Residues 253-271 traverse the membrane as a helical segment; it reads WQLTLCIVLIFTVIYFSIW. The Cytoplasmic segment spans residues 272–277; sequence KGVKTS. Residue Thr-276 is modified to Phosphothreonine. A helical transmembrane segment spans residues 278–297; it reads GKVVWVTATFPYIVLSVLLV. Residues 298–324 lie on the Extracellular side of the membrane; the sequence is RGATLPGAWRGVVFYLKPNWQKLLETG. The chain crosses the membrane as a helical span at residues 325–347; the sequence is VWVDAAAQIFFSLGPGFGVLLAF. Ser-336 contacts Na(+). Over 348 to 360 the chain is Cytoplasmic; it reads ASYNKFNNNCYQD. A helical transmembrane segment spans residues 361 to 380; that stretch reads ALVTSVVNCMTSFVSGFVIF. Residue Asn-368 participates in Na(+) binding. The Extracellular segment spans residues 381–421; that stretch reads TVLGYMAEMRNEDVSEVAKDAGPSLLFITYAEAIANMPAST. Residues 422-443 traverse the membrane as a helical segment; that stretch reads FFAIIFFLMLITLGLDSTFAGL. The Na(+) site is built by Leu-434, Asp-437, and Ser-438. Thr-439 is a serotonin binding site. Over 444-463 the chain is Cytoplasmic; the sequence is EGVITAVLDEFPHIWAKRRE. A helical transmembrane segment spans residues 464–483; that stretch reads WFVLIVVITCVLGSLLTLTS. The Extracellular portion of the chain corresponds to 484 to 494; that stretch reads GGAYVVTLLEE. Positions 494 and 495 each coordinate serotonin. A helical membrane pass occupies residues 495–516; sequence YATGPAVLTVALIEAVAVSWFY. At 517-538 the chain is on the cytoplasmic side; the sequence is GITQFCSDVKEMLGFSPGWFWR. The helical transmembrane segment at 539-558 threads the bilayer; the sequence is ICWVAISPLFLLFIICSFLM. Phe-556 and Ser-559 together coordinate serotonin. The Extracellular segment spans residues 559 to 574; that stretch reads SPPQLRLFQYNYPHWS. The chain crosses the membrane as a helical span at residues 575-595; that stretch reads IVLGYCIGMSSVICIPTYIIY. The Cytoplasmic portion of the chain corresponds to 596–630; sequence RLISTPGTLKERIIKSITPETPTEIPCGDIRMNAV. Residues 616-624 form an interaction with RAB4A region; that stretch reads TPTEIPCGD.

It belongs to the sodium:neurotransmitter symporter (SNF) (TC 2.A.22) family. SLC6A4 subfamily. Monomer or homooligomer. Interacts with TGFB1I1. Interacts with SEC23A, SEC24C and PATJ. Interacts with NOS1; the interaction may diminish the cell surface localization of SERT in the brain and, correspondingly, reduce serotonin reuptake. Interacts (via C-terminus) with SCAMP2; the interaction is direct and retains transporter molecules intracellularly. Interacts with filamentous actin and STX1A. Interacts (via the N-terminus) with STX1A (via the H3 domain); this interaction regulates SLC4A6 channel conductance. Interacts with ITGAV:ITGB3. Interacts (via C-terminus) with ITGB3; this interaction regulates SLC6A4 trafficking. Post-translationally, phosphorylation at Thr-276 increases 5-HT uptake and is required for cGMP-mediated SERT regulation. As to expression, expressed in the intestinal crypt epithelial cells and myenteric neurons of the small intestine (at protein level). Expressed in the brain.

It localises to the cell membrane. The protein resides in the endomembrane system. It is found in the endosome membrane. Its subcellular location is the synapse. The protein localises to the cell junction. It localises to the focal adhesion. The protein resides in the cell projection. It is found in the neuron projection. The catalysed reaction is serotonin(out) + K(+)(in) + Na(+)(out) + H(+)(in) = serotonin(in) + K(+)(out) + Na(+)(in) + H(+)(out). Serotonin transporter that cotransports serotonin with one Na(+) ion in exchange for one K(+) ion and possibly one proton in an overall electroneutral transport cycle. Transports serotonin across the plasma membrane from the extracellular compartment to the cytosol thus limiting serotonin intercellular signaling. Essential for serotonin homeostasis in the central nervous system. In the developing somatosensory cortex, acts in glutamatergic neurons to control serotonin uptake and its trophic functions accounting for proper spatial organization of cortical neurons and elaboration of sensory circuits. In the mature cortex, acts primarily in brainstem raphe neurons to mediate serotonin uptake from the synaptic cleft back into the pre-synaptic terminal thus terminating serotonin signaling at the synapse. Modulates mucosal serotonin levels in the gastrointestinal tract through uptake and clearance of serotonin in enterocytes. Required for enteric neurogenesis and gastrointestinal reflexes. Regulates blood serotonin levels by ensuring rapid high affinity uptake of serotonin from plasma to platelets, where it is further stored in dense granules via vesicular monoamine transporters and then released upon stimulation. Mechanistically, the transport cycle starts with an outward-open conformation having Na1(+) and Cl(-) sites occupied. The binding of a second extracellular Na2(+) ion and serotonin substrate leads to structural changes to outward-occluded to inward-occluded to inward-open, where the Na2(+) ion and serotonin are released into the cytosol. Binding of intracellular K(+) ion induces conformational transitions to inward-occluded to outward-open and completes the cycle by releasing K(+) possibly together with a proton bound to Asp-98 into the extracellular compartment. Na1(+) and Cl(-) ions remain bound throughout the transport cycle. Additionally, displays serotonin-induced channel-like conductance for monovalent cations, mainly Na(+) ions. The channel activity is uncoupled from the transport cycle and may contribute to the membrane resting potential or excitability. The chain is Sodium-dependent serotonin transporter (Slc6a4) from Rattus norvegicus (Rat).